The chain runs to 128 residues: Transcription antitermination protein NusB (128 aa).

Belongs to the NusB family.

In terms of biological role, involved in transcription antitermination. Required for transcription of ribosomal RNA (rRNA) genes. Binds specifically to the boxA antiterminator sequence of the ribosomal RNA (rrn) operons. In Staphylococcus carnosus (strain TM300), this protein is Transcription antitermination protein NusB.